Consider the following 829-residue polypeptide: Probable beta-glucosidase H (829 aa).

An N-linked (GlcNAc...) asparagine glycan is attached at Asn13. Residue Asp225 is part of the active site. Residues Asn304, Asn473, Asn602, Asn627, and Asn664 are each glycosylated (N-linked (GlcNAc...) asparagine). One can recognise a PA14 domain in the interval 389–548 (RMLSNAVIHF…DPEQMVANAV (160 aa)).

It belongs to the glycosyl hydrolase 3 family.

The protein resides in the secreted. It carries out the reaction Hydrolysis of terminal, non-reducing beta-D-glucosyl residues with release of beta-D-glucose.. It participates in glycan metabolism; cellulose degradation. Beta-glucosidases are one of a number of cellulolytic enzymes involved in the degradation of cellulosic biomass. Catalyzes the last step releasing glucose from the inhibitory cellobiose. This Neosartorya fischeri (strain ATCC 1020 / DSM 3700 / CBS 544.65 / FGSC A1164 / JCM 1740 / NRRL 181 / WB 181) (Aspergillus fischerianus) protein is Probable beta-glucosidase H (bglH).